Consider the following 321-residue polypeptide: Probable protein phosphatase methylesterase 1 (321 aa).

Active-site residues include serine 170, aspartate 195, and histidine 307.

Belongs to the AB hydrolase superfamily.

The enzyme catalyses [phosphatase 2A protein]-C-terminal L-leucine methyl ester + H2O = [phosphatase 2A protein]-C-terminal L-leucine + methanol + H(+). In terms of biological role, demethylates proteins that have been reversibly carboxymethylated. This is Probable protein phosphatase methylesterase 1 (ppme1) from Dictyostelium discoideum (Social amoeba).